Consider the following 112-residue polypeptide: Ig kappa chain V-II region 2S1.3 (112 aa).

A framework-1 region spans residues 1–23; sequence DIVMTQAAFSNPVTLGTSASFSC. The cysteines at positions 23 and 93 are disulfide-linked. A complementarity-determining-1 region spans residues 24–39; it reads RSSKSLQQSKGITYLY. The tract at residues 40–54 is framework-2; sequence WYLQKPGQSPQLLIY. Residues 55–61 are complementarity-determining-2; it reads QMSNLAS. A framework-3 region spans residues 62-93; sequence GVPDRFSGSGSGTDFTLRISRVEAEDVGVYYC. The interval 94–102 is complementarity-determining-3; it reads ANLQELPYT. Residues 103-112 form a framework-4 region; sequence FGGGTKLEIK.

The protein is Ig kappa chain V-II region 2S1.3 of Mus musculus (Mouse).